Consider the following 556-residue polypeptide: Formate--tetrahydrofolate ligase (556 aa).

65–72 (TPAGEGKS) is a binding site for ATP.

This sequence belongs to the formate--tetrahydrofolate ligase family.

The enzyme catalyses (6S)-5,6,7,8-tetrahydrofolate + formate + ATP = (6R)-10-formyltetrahydrofolate + ADP + phosphate. The protein operates within one-carbon metabolism; tetrahydrofolate interconversion. This is Formate--tetrahydrofolate ligase from Streptococcus agalactiae serotype V (strain ATCC BAA-611 / 2603 V/R).